Reading from the N-terminus, the 392-residue chain is Outer membrane protein assembly factor BamB (392 aa).

The signal sequence occupies residues 1–19 (MQLRKLLLPGLLSVTLLSG). Residue Cys20 is the site of N-palmitoyl cysteine attachment. The S-diacylglycerol cysteine moiety is linked to residue Cys20.

This sequence belongs to the BamB family. In terms of assembly, part of the Bam complex, which is composed of the outer membrane protein BamA, and four lipoproteins BamB, BamC, BamD and BamE. Monomer. Interacts directly with BamA. The Bam complex has the shape of a hat, with the BamA beta-barrel crown in the outer membrane and the periplasmic brim formed by the BamA POTRA domains and the 4 lipoproteins.

The protein localises to the cell outer membrane. In terms of biological role, part of the outer membrane protein assembly complex (Bam), which is involved in assembly and insertion of beta-barrel proteins into the outer membrane. Nonessential member of the complex, which may orient the flexible periplasmic domain of BamA for interaction with other Bam components, chaperones and nascent outer membrane proteins. Efficient substrate folding and insertion into the outer membrane requires all 5 subunits. A lateral gate may open between the first and last strands of the BamA beta-barrel that allows substrate to insert into the outer membrane; comparison of the structures of complete and nearly complete Bam complexes show there is considerable movement of all 5 proteins. This Escherichia coli (strain K12) protein is Outer membrane protein assembly factor BamB.